The chain runs to 1135 residues: Nonribosomal peptide synthetase 9 (1135 aa).

A condensation 1 region spans residues 23-77 (TKQITTATYIKLAWAVVISCNTGSNDTVFGITVNGRGAPIDGAGEMTGATIATIP). Positions 177–562 (SYAELIRSAN…RRIDEIQEAT (386 aa)) are adenylation. The segment at 485-507 (GPSPPVGRSSSNRAGSGRCAMGS) is disordered. A compositionally biased stretch (low complexity) spans 491–502 (GRSSSNRAGSGR). Positions 672-748 (APSNRVEQDL…AIANKIGDVQ (77 aa)) constitute a Carrier domain. O-(pantetheine 4'-phosphoryl)serine is present on serine 709. The interval 746–999 (DVQRAAIKLV…TTLWPVVAQV (254 aa)) is condensation 2.

This sequence belongs to the NRP synthetase family.

In terms of biological role, nonribosomal peptide synthesis (NRPS) is a key mechanism responsible for the biosynthesis of bioactive metabolites which are potentially contributing to organismal virulence. The protein is Nonribosomal peptide synthetase 9 (NRPS9) of Aspergillus fumigatus (strain ATCC MYA-4609 / CBS 101355 / FGSC A1100 / Af293) (Neosartorya fumigata).